The following is a 441-amino-acid chain: UDP-N-acetylmuramoylalanine--D-glutamate ligase (441 aa).

112-118 lines the ATP pocket; the sequence is GTNGKTT.

It belongs to the MurCDEF family.

Its subcellular location is the cytoplasm. It catalyses the reaction UDP-N-acetyl-alpha-D-muramoyl-L-alanine + D-glutamate + ATP = UDP-N-acetyl-alpha-D-muramoyl-L-alanyl-D-glutamate + ADP + phosphate + H(+). It participates in cell wall biogenesis; peptidoglycan biosynthesis. Its function is as follows. Cell wall formation. Catalyzes the addition of glutamate to the nucleotide precursor UDP-N-acetylmuramoyl-L-alanine (UMA). The protein is UDP-N-acetylmuramoylalanine--D-glutamate ligase of Gloeobacter violaceus (strain ATCC 29082 / PCC 7421).